Here is a 141-residue protein sequence, read N- to C-terminus: Large-conductance mechanosensitive channel (141 aa).

Transmembrane regions (helical) follow at residues 14 to 34, 38 to 58, and 82 to 102; these read VVDL…VNSL, VIMP…YYIP, and GQFL…FMVI.

This sequence belongs to the MscL family. As to quaternary structure, homopentamer.

The protein localises to the cell inner membrane. In terms of biological role, channel that opens in response to stretch forces in the membrane lipid bilayer. May participate in the regulation of osmotic pressure changes within the cell. The chain is Large-conductance mechanosensitive channel from Methylorubrum extorquens (strain CM4 / NCIMB 13688) (Methylobacterium extorquens).